The primary structure comprises 76 residues: Membrane protein UL43 homolog (76 aa).

Transmembrane regions (helical) follow at residues 7-27 (AVCVVLAAFGYWVAAPISLAF) and 54-74 (ISRWLIVSVYVAAGLCYATII).

This sequence belongs to the alphaherpesvirinae HHV-1 UL43 family.

The protein resides in the membrane. The polypeptide is Membrane protein UL43 homolog (Equus caballus (Horse)).